A 203-amino-acid polypeptide reads, in one-letter code: V-type ATP synthase subunit D (203 aa).

This sequence belongs to the V-ATPase D subunit family.

In terms of biological role, produces ATP from ADP in the presence of a proton gradient across the membrane. The chain is V-type ATP synthase subunit D from Thermotoga neapolitana (strain ATCC 49049 / DSM 4359 / NBRC 107923 / NS-E).